Consider the following 476-residue polypeptide: Tubulointerstitial nephritis antigen (476 aa).

Asn38 is a glycosylation site (N-linked (GlcNAc...) asparagine). The SMB domain maps to 59–107; the sequence is NFGCCEDRDDGCVTEFYAANALCYCDKFCDRENSDCCPDYKSFCREEKE. Cystine bridges form between Cys63-Cys70, Cys70-Cys102, Cys81-Cys83, Cys81-Cys95, Cys87-Cys94, and Cys95-Cys102. Residues Asn175, Asn314, Asn360, and Asn455 are each glycosylated (N-linked (GlcNAc...) asparagine).

The protein belongs to the peptidase C1 family. It has been suggested that the active SMB domain may be permitted considerable disulfide bond heterogeneity or variability, thus 2 alternate disulfide patterns based on 3D structures are described with 1 disulfide bond conserved in both. As to expression, expressed in the kidney cortex, small intestine and cornea.

Its subcellular location is the secreted. It is found in the extracellular space. The protein resides in the extracellular matrix. It localises to the basement membrane. Functionally, mediates adhesion of proximal tubule epithelial cells via integrins alpha3-beta1 and alphaV-beta3. This is a non catalytic peptidase C1 family protein. The polypeptide is Tubulointerstitial nephritis antigen (TINAG) (Homo sapiens (Human)).